A 95-amino-acid polypeptide reads, in one-letter code: Parvalbumin beta 3 (95 aa).

Alanine 1 is modified (N-acetylalanine). 2 consecutive EF-hand domains span residues 39-66 (FFAI…FSAG) and 77-95 (DVDG…LVKA). Ca(2+) contacts are provided by aspartate 44, aspartate 46, serine 48, phenylalanine 50, glutamate 52, glutamate 55, aspartate 77, aspartate 79, aspartate 81, methionine 83, and glutamate 88.

The protein belongs to the parvalbumin family.

In muscle, parvalbumin is thought to be involved in relaxation after contraction. It binds two calcium ions. This Merluccius paradoxus (Deep-water Cape hake) protein is Parvalbumin beta 3.